A 158-amino-acid chain; its full sequence is Transcription antitermination protein NusB (158 aa).

The protein belongs to the NusB family.

Functionally, involved in transcription antitermination. Required for transcription of ribosomal RNA (rRNA) genes. Binds specifically to the boxA antiterminator sequence of the ribosomal RNA (rrn) operons. This is Transcription antitermination protein NusB from Bartonella henselae (strain ATCC 49882 / DSM 28221 / CCUG 30454 / Houston 1) (Rochalimaea henselae).